Consider the following 233-residue polypeptide: Purine nucleoside phosphorylase DeoD-type (233 aa).

His-4 provides a ligand contact to a purine D-ribonucleoside. Phosphate contacts are provided by residues Gly-20, Arg-24, Arg-43, and 87-90; that span reads RIGT. A purine D-ribonucleoside-binding positions include 179–181 and 203–204; these read EME and SD. The active-site Proton donor is Asp-204.

This sequence belongs to the PNP/UDP phosphorylase family. As to quaternary structure, homohexamer; trimer of homodimers.

The enzyme catalyses a purine D-ribonucleoside + phosphate = a purine nucleobase + alpha-D-ribose 1-phosphate. The catalysed reaction is a purine 2'-deoxy-D-ribonucleoside + phosphate = a purine nucleobase + 2-deoxy-alpha-D-ribose 1-phosphate. Its function is as follows. Catalyzes the reversible phosphorolytic breakdown of the N-glycosidic bond in the beta-(deoxy)ribonucleoside molecules, with the formation of the corresponding free purine bases and pentose-1-phosphate. The protein is Purine nucleoside phosphorylase DeoD-type of Helicobacter pylori (strain ATCC 700392 / 26695) (Campylobacter pylori).